Consider the following 1342-residue polypeptide: DNA-directed RNA polymerase subunit beta (1342 aa).

It belongs to the RNA polymerase beta chain family. As to quaternary structure, the RNAP catalytic core consists of 2 alpha, 1 beta, 1 beta' and 1 omega subunit. When a sigma factor is associated with the core the holoenzyme is formed, which can initiate transcription.

It carries out the reaction RNA(n) + a ribonucleoside 5'-triphosphate = RNA(n+1) + diphosphate. Its function is as follows. DNA-dependent RNA polymerase catalyzes the transcription of DNA into RNA using the four ribonucleoside triphosphates as substrates. The sequence is that of DNA-directed RNA polymerase subunit beta from Serratia proteamaculans (strain 568).